A 467-amino-acid chain; its full sequence is Cysteine--tRNA ligase (467 aa).

C28 lines the Zn(2+) pocket. The short motif at 30–40 (PTVYNYIHVGN) is the 'HIGH' region element. C212, H237, and E241 together coordinate Zn(2+). The 'KMSKS' region motif lies at 269–273 (KMSKS). K272 provides a ligand contact to ATP.

The protein belongs to the class-I aminoacyl-tRNA synthetase family. As to quaternary structure, monomer. Requires Zn(2+) as cofactor.

The protein localises to the cytoplasm. It carries out the reaction tRNA(Cys) + L-cysteine + ATP = L-cysteinyl-tRNA(Cys) + AMP + diphosphate. This chain is Cysteine--tRNA ligase, found in Oenococcus oeni (strain ATCC BAA-331 / PSU-1).